The sequence spans 621 residues: Type 2 DNA topoisomerase 6 subunit B (621 aa).

ATP-binding positions include asparagine 48, aspartate 80, 101 to 102 (SR), 111 to 118 (GQQGIGIS), and lysine 435.

The protein belongs to the TOP6B family. As to quaternary structure, homodimer. Heterotetramer of two Top6A and two Top6B chains.

The catalysed reaction is ATP-dependent breakage, passage and rejoining of double-stranded DNA.. Functionally, relaxes both positive and negative superturns and exhibits a strong decatenase activity. In Methanosarcina mazei (strain ATCC BAA-159 / DSM 3647 / Goe1 / Go1 / JCM 11833 / OCM 88) (Methanosarcina frisia), this protein is Type 2 DNA topoisomerase 6 subunit B.